The chain runs to 235 residues: Ribonuclease S-2 (235 aa).

Residues 1–31 (MATVQKSQHSHFFLLVGCIVHLSNFCSTTTA) form the signal peptide. RNA is bound at residue Gln41. Cys47 and Cys54 are disulfide-bonded. His66 is an RNA binding site. The active-site Proton donor is the His66. An N-linked (GlcNAc...) asparagine glycan is attached at Asn72. Cystine bridges form between Cys80-Cys129, Cys189-Cys217, and Cys200-Cys211. RNA contacts are provided by residues 105–106 (DL), Arg108, and Phe118. Residue Gln122 is part of the active site. RNA is bound at residue 125–126 (KH). Residue His126 is the Proton acceptor of the active site.

This sequence belongs to the RNase T2 family.

It is found in the secreted. It localises to the extracellular space. The catalysed reaction is a ribonucleotidyl-ribonucleotide-RNA + H2O = a 3'-end 3'-phospho-ribonucleotide-RNA + a 5'-end dephospho-ribonucleoside-RNA + H(+). Self-incompatibility (SI) is the inherited ability of a flowering plant to prevent self-fertilization by discriminating between self and non-self pollen during pollination. In many species, self-incompatibility is controlled by the single, multiallelic locus S. In Antirrhinum hispanicum (Snapdragon), this protein is Ribonuclease S-2 (S2).